We begin with the raw amino-acid sequence, 86 residues long: Antitoxin VapB33 (86 aa).

Its function is as follows. Antitoxin component of a type II toxin-antitoxin (TA) system. Upon expression in M.smegmatis neutralizes the effect of cognate toxin VapC33. This Mycobacterium tuberculosis (strain ATCC 25618 / H37Rv) protein is Antitoxin VapB33 (vapB33).